A 316-amino-acid polypeptide reads, in one-letter code: Transaldolase (316 aa).

The active-site Schiff-base intermediate with substrate is Lys132.

This sequence belongs to the transaldolase family. Type 1 subfamily. In terms of assembly, homodimer.

It localises to the cytoplasm. It carries out the reaction D-sedoheptulose 7-phosphate + D-glyceraldehyde 3-phosphate = D-erythrose 4-phosphate + beta-D-fructose 6-phosphate. It functions in the pathway carbohydrate degradation; pentose phosphate pathway; D-glyceraldehyde 3-phosphate and beta-D-fructose 6-phosphate from D-ribose 5-phosphate and D-xylulose 5-phosphate (non-oxidative stage): step 2/3. Transaldolase is important for the balance of metabolites in the pentose-phosphate pathway. In Vibrio campbellii (strain ATCC BAA-1116), this protein is Transaldolase.